A 389-amino-acid chain; its full sequence is Probable dual-specificity RNA methyltransferase RlmN (389 aa).

The Proton acceptor role is filled by Glu-114. Residues 120–358 enclose the Radical SAM core domain; the sequence is QHYGLSVCVT…CVVRQEHGTD (239 aa). An intrachain disulfide couples Cys-127 to Cys-363. [4Fe-4S] cluster contacts are provided by Cys-134, Cys-138, and Cys-141. S-adenosyl-L-methionine-binding positions include 186-187, Ser-218, 241-243, and Asn-319; these read GE and SLH. The active-site S-methylcysteine intermediate is Cys-363. The interval 370–389 is disordered; the sequence is TMKRDRQKAVAEASGKSEGK. Residues 371–389 show a composition bias toward basic and acidic residues; it reads MKRDRQKAVAEASGKSEGK.

This sequence belongs to the radical SAM superfamily. RlmN family. [4Fe-4S] cluster is required as a cofactor.

The protein localises to the cytoplasm. It carries out the reaction adenosine(2503) in 23S rRNA + 2 reduced [2Fe-2S]-[ferredoxin] + 2 S-adenosyl-L-methionine = 2-methyladenosine(2503) in 23S rRNA + 5'-deoxyadenosine + L-methionine + 2 oxidized [2Fe-2S]-[ferredoxin] + S-adenosyl-L-homocysteine. The enzyme catalyses adenosine(37) in tRNA + 2 reduced [2Fe-2S]-[ferredoxin] + 2 S-adenosyl-L-methionine = 2-methyladenosine(37) in tRNA + 5'-deoxyadenosine + L-methionine + 2 oxidized [2Fe-2S]-[ferredoxin] + S-adenosyl-L-homocysteine. Specifically methylates position 2 of adenine 2503 in 23S rRNA and position 2 of adenine 37 in tRNAs. This Streptococcus thermophilus (strain CNRZ 1066) protein is Probable dual-specificity RNA methyltransferase RlmN.